The sequence spans 371 residues: Peptidyl-prolyl cis-trans isomerase CPR6 (371 aa).

Residues 7-174 enclose the PPIase cyclophilin-type domain; it reads FFDISIGGKP…RDVKIDDCGV (168 aa). TPR repeat units lie at residues 219 to 252, 270 to 303, and 308 to 341; these read IETV…LKEY, VSIP…EAAD, and AKAL…QPND.

The protein belongs to the cyclophilin-type PPIase family. PPIase D subfamily. As to quaternary structure, interacts with RPD3.

The protein localises to the cytoplasm. The catalysed reaction is [protein]-peptidylproline (omega=180) = [protein]-peptidylproline (omega=0). Its function is as follows. PPIases accelerate the folding of proteins. It catalyzes the cis-trans isomerization of proline imidic peptide bonds in oligopeptides. The protein is Peptidyl-prolyl cis-trans isomerase CPR6 (CPR6) of Saccharomyces cerevisiae (strain ATCC 204508 / S288c) (Baker's yeast).